The primary structure comprises 306 residues: Acetaldehyde dehydrogenase (306 aa).

Residue 12–15 (SGNI) participates in NAD(+) binding. Residue Cys127 is the Acyl-thioester intermediate of the active site. NAD(+)-binding positions include 158–166 (SAGPGTRAN) and Asn277.

The protein belongs to the acetaldehyde dehydrogenase family.

It catalyses the reaction acetaldehyde + NAD(+) + CoA = acetyl-CoA + NADH + H(+). The chain is Acetaldehyde dehydrogenase from Mycolicibacterium gilvum (strain PYR-GCK) (Mycobacterium gilvum (strain PYR-GCK)).